A 390-amino-acid chain; its full sequence is Elongation factor Ts, mitochondrial (390 aa).

This sequence belongs to the EF-Ts family.

Its subcellular location is the mitochondrion. In terms of biological role, associates with the EF-Tu.GDP complex and induces the exchange of GDP to GTP. It remains bound to the aminoacyl-tRNA.EF-Tu.GTP complex up to the GTP hydrolysis stage on the ribosome. The polypeptide is Elongation factor Ts, mitochondrial (Plasmodium vivax (strain Salvador I)).